The chain runs to 315 residues: 4-hydroxy-3-methylbut-2-enyl diphosphate reductase (315 aa).

Cysteine 12 provides a ligand contact to [4Fe-4S] cluster. 2 residues coordinate (2E)-4-hydroxy-3-methylbut-2-enyl diphosphate: histidine 43 and histidine 81. Positions 43 and 81 each coordinate dimethylallyl diphosphate. Positions 43 and 81 each coordinate isopentenyl diphosphate. A [4Fe-4S] cluster-binding site is contributed by cysteine 103. Histidine 131 is a (2E)-4-hydroxy-3-methylbut-2-enyl diphosphate binding site. Histidine 131 lines the dimethylallyl diphosphate pocket. An isopentenyl diphosphate-binding site is contributed by histidine 131. Glutamate 133 functions as the Proton donor in the catalytic mechanism. A (2E)-4-hydroxy-3-methylbut-2-enyl diphosphate-binding site is contributed by threonine 170. A [4Fe-4S] cluster-binding site is contributed by cysteine 198. Positions 226, 228, and 271 each coordinate (2E)-4-hydroxy-3-methylbut-2-enyl diphosphate. Residues serine 226, asparagine 228, and serine 271 each coordinate dimethylallyl diphosphate. Residues serine 226, asparagine 228, and serine 271 each contribute to the isopentenyl diphosphate site.

This sequence belongs to the IspH family. The cofactor is [4Fe-4S] cluster.

It carries out the reaction isopentenyl diphosphate + 2 oxidized [2Fe-2S]-[ferredoxin] + H2O = (2E)-4-hydroxy-3-methylbut-2-enyl diphosphate + 2 reduced [2Fe-2S]-[ferredoxin] + 2 H(+). It catalyses the reaction dimethylallyl diphosphate + 2 oxidized [2Fe-2S]-[ferredoxin] + H2O = (2E)-4-hydroxy-3-methylbut-2-enyl diphosphate + 2 reduced [2Fe-2S]-[ferredoxin] + 2 H(+). It participates in isoprenoid biosynthesis; dimethylallyl diphosphate biosynthesis; dimethylallyl diphosphate from (2E)-4-hydroxy-3-methylbutenyl diphosphate: step 1/1. The protein operates within isoprenoid biosynthesis; isopentenyl diphosphate biosynthesis via DXP pathway; isopentenyl diphosphate from 1-deoxy-D-xylulose 5-phosphate: step 6/6. Functionally, catalyzes the conversion of 1-hydroxy-2-methyl-2-(E)-butenyl 4-diphosphate (HMBPP) into a mixture of isopentenyl diphosphate (IPP) and dimethylallyl diphosphate (DMAPP). Acts in the terminal step of the DOXP/MEP pathway for isoprenoid precursor biosynthesis. The protein is 4-hydroxy-3-methylbut-2-enyl diphosphate reductase of Geobacillus sp. (strain WCH70).